Here is a 262-residue protein sequence, read N- to C-terminus: Hydroxyethylthiazole kinase (262 aa).

Residue methionine 39 participates in substrate binding. ATP is bound by residues lysine 115 and threonine 160. Residue glycine 187 participates in substrate binding.

The protein belongs to the Thz kinase family. Mg(2+) serves as cofactor.

The catalysed reaction is 5-(2-hydroxyethyl)-4-methylthiazole + ATP = 4-methyl-5-(2-phosphooxyethyl)-thiazole + ADP + H(+). It functions in the pathway cofactor biosynthesis; thiamine diphosphate biosynthesis; 4-methyl-5-(2-phosphoethyl)-thiazole from 5-(2-hydroxyethyl)-4-methylthiazole: step 1/1. Its function is as follows. Catalyzes the phosphorylation of the hydroxyl group of 4-methyl-5-beta-hydroxyethylthiazole (THZ). The polypeptide is Hydroxyethylthiazole kinase (Staphylococcus epidermidis (strain ATCC 12228 / FDA PCI 1200)).